Consider the following 94-residue polypeptide: Alpha-conotoxin-like Vt20.1 (94 aa).

Positions 1-25 (MPKLAVVLLVLLILPLSYFDAGGQA) are cleaved as a signal peptide. A propeptide spanning residues 26–44 (VQGDWRGNRLARDLQRGGR) is cleaved from the precursor. 4-carboxyglutamate is present on residues Glu-47 and Glu-49. 4 disulfide bridges follow: Cys-63/Cys-72, Cys-68/Cys-80, Cys-73/Cys-90, and Cys-78/Cys-92.

This sequence belongs to the conotoxin D superfamily. In terms of assembly, hetero-, homo- or pseudo-homodimer (identical sequence, different post-translational modifications). As to expression, expressed by the venom duct.

It localises to the secreted. In terms of biological role, alpha-conotoxins act on postsynaptic membranes, they bind to the nicotinic acetylcholine receptors (nAChR) and thus inhibit them. Through its two C-terminal domains, this homodimeric protein would bind to two nAChR allosteric sites, located outside the nAChR C-loop of the principal binding face and at the adjacent binding interface in a clockwise direction. This toxin specifically blocks mammalian neuronal nAChR of the alpha-7/CHRNA7, alpha-3-beta-2/CHRNA3-CHRNB2 and alpha-4-beta-2/CHRNA4-CHRNB2 subtypes. The sequence is that of Alpha-conotoxin-like Vt20.1 from Conus planorbis (Planorbis cone).